The following is a 237-amino-acid chain: MRVVVLSGAGISAESDVPTFRDDKNGLWARFDPYQLSSTQGWQRNPERVWGWYLWRHYLVANVKPNDGHRAIAAWQEQIEVSVITQNVDDLHERAGSTPVHHLHGSLFKFHCARCNVAYTGALPDMPEPVLEVDPPVCYCGGLIRPAIVWFGEPLPDEPWRRAVEATETTDVMVVVGTSAIVYPAAGLPELALSRGAVVIEVNPEPTPLTKNATISIRETASQALPGLLQRLPALLK.

One can recognise a Deacetylase sirtuin-type domain in the interval 1 to 235; sequence MRVVVLSGAG…PGLLQRLPAL (235 aa). An NAD(+)-binding site is contributed by 8–28; the sequence is GAGISAESDVPTFRDDKNGLW. Residues Tyr-53 and Arg-56 each coordinate substrate. 86 to 89 is a binding site for NAD(+); that stretch reads QNVD. The Proton acceptor role is filled by His-104. Residues Cys-112, Cys-115, Cys-138, and Cys-140 each coordinate Zn(2+). Residues 177 to 179, 203 to 205, and Ala-221 contribute to the NAD(+) site; these read GTS and NPE.

Belongs to the sirtuin family. Class III subfamily. Zn(2+) is required as a cofactor.

The protein resides in the cytoplasm. It catalyses the reaction N(6)-acetyl-L-lysyl-[protein] + NAD(+) + H2O = 2''-O-acetyl-ADP-D-ribose + nicotinamide + L-lysyl-[protein]. The catalysed reaction is N(6)-succinyl-L-lysyl-[protein] + NAD(+) + H2O = 2''-O-succinyl-ADP-D-ribose + nicotinamide + L-lysyl-[protein]. NAD-dependent lysine deacetylase and desuccinylase that specifically removes acetyl and succinyl groups on target proteins. Modulates the activities of several proteins which are inactive in their acylated form. The polypeptide is NAD-dependent protein deacylase (Mycobacterium leprae (strain TN)).